A 382-amino-acid chain; its full sequence is Galactokinase (382 aa).

34–37 (EHTD) is a substrate binding site. 124–130 (GAGLSSS) is an ATP binding site. Residues serine 130 and glutamate 162 each coordinate Mg(2+). Aspartate 174 serves as the catalytic Proton acceptor. Residue tyrosine 223 coordinates substrate.

It belongs to the GHMP kinase family. GalK subfamily.

The protein resides in the cytoplasm. The enzyme catalyses alpha-D-galactose + ATP = alpha-D-galactose 1-phosphate + ADP + H(+). It participates in carbohydrate metabolism; galactose metabolism. In terms of biological role, catalyzes the transfer of the gamma-phosphate of ATP to D-galactose to form alpha-D-galactose-1-phosphate (Gal-1-P). The polypeptide is Galactokinase (Salmonella agona (strain SL483)).